A 323-amino-acid polypeptide reads, in one-letter code: Ribonuclease Z (323 aa).

Zn(2+) is bound by residues H62, H64, D66, H67, H144, D215, and H273. D66 functions as the Proton acceptor in the catalytic mechanism.

This sequence belongs to the RNase Z family. In terms of assembly, homodimer. Requires Zn(2+) as cofactor.

The enzyme catalyses Endonucleolytic cleavage of RNA, removing extra 3' nucleotides from tRNA precursor, generating 3' termini of tRNAs. A 3'-hydroxy group is left at the tRNA terminus and a 5'-phosphoryl group is left at the trailer molecule.. Its function is as follows. Zinc phosphodiesterase, which displays some tRNA 3'-processing endonuclease activity. Probably involved in tRNA maturation, by removing a 3'-trailer from precursor tRNA. In Synechococcus sp. (strain WH7803), this protein is Ribonuclease Z.